Here is a 901-residue protein sequence, read N- to C-terminus: Desmocollin-2 (901 aa).

An N-terminal signal peptide occupies residues 1 to 27 (MEAARPSGSWNGALCRLLLLTLAILIF). The propeptide occupies 28 to 135 (ASDACKNVTL…KEKVLRRAKR (108 aa)). Residues Asn-34 and Asn-166 are each glycosylated (N-linked (GlcNAc...) asparagine). 5 consecutive Cadherin domains span residues 136–243 (RWAP…YPIF), 244–355 (TEET…LPTF), 356–471 (TRTS…GPEC), 472–579 (NPPI…FIPK), and 580–694 (KTVI…QLGK). The Extracellular portion of the chain corresponds to 136–694 (RWAPIPCSML…IGGGGVQLGK (559 aa)). An N-linked (GlcNAc...) (complex) asparagine glycan is attached at Asn-392. Asn-546 and Asn-629 each carry an N-linked (GlcNAc...) asparagine glycan. A helical transmembrane segment spans residues 695–715 (WAILAILLGIALLFCILFTLV). At 716–901 (CGASGTSKQP…RTLAEACMKR (186 aa)) the chain is on the cytoplasmic side. Residues Ser-864, Ser-868, and Ser-873 each carry the phosphoserine modification.

Interacts with DSP, PKP2 and JUP. Interacts with DSG3; the interaction may limit the interaction of DSC3 with p38MAPK family members and therefore repress p38MAPK signaling activation. As to expression, expressed at intercalated disks in the heart, where it is colocalized with CDH2 (at protein level). Expressed in intestinal mucosal cells (at protein level).

The protein localises to the cell membrane. Its subcellular location is the cell junction. It localises to the desmosome. In terms of biological role, a component of desmosome cell-cell junctions which are required for positive regulation of cellular adhesion. Promotes timely incorporation of DSG2 into desmosome intercellular junctions and promotes interaction of desmosome cell junctions with intermediate filament cytokeratin, via modulation of DSP phosphorylation. Plays an important role in desmosome-mediated maintenance of intestinal epithelial cell intercellular adhesion strength and barrier function. Positively regulates wound healing of intestinal mucosa via promotion of epithelial cell migration, and also plays a role in mechanotransduction of force between intestinal epithelial cells and extracellular matrix. May contribute to epidermal cell positioning (stratification) by mediating differential adhesiveness between cells that express different isoforms. May promote p38MAPK signaling activation that facilitates keratinocyte migration. In Homo sapiens (Human), this protein is Desmocollin-2.